A 169-amino-acid polypeptide reads, in one-letter code: Peptide methionine sulfoxide reductase MsrA (169 aa).

Cysteine 10 is a catalytic residue.

Belongs to the MsrA Met sulfoxide reductase family.

It carries out the reaction L-methionyl-[protein] + [thioredoxin]-disulfide + H2O = L-methionyl-(S)-S-oxide-[protein] + [thioredoxin]-dithiol. It catalyses the reaction [thioredoxin]-disulfide + L-methionine + H2O = L-methionine (S)-S-oxide + [thioredoxin]-dithiol. Its function is as follows. Has an important function as a repair enzyme for proteins that have been inactivated by oxidation. Catalyzes the reversible oxidation-reduction of methionine sulfoxide in proteins to methionine. This Streptococcus pyogenes serotype M2 (strain MGAS10270) protein is Peptide methionine sulfoxide reductase MsrA.